The chain runs to 759 residues: Forkhead box protein M1 (759 aa).

The tract at residues 1-92 (MRTSPRRPLI…MRLPSNPPQS (92 aa)) is disordered. Residues 48-63 (LAHELEDMAPKSKADQ) are compositionally biased toward basic and acidic residues. Positions 260–358 (RPPYSYMALI…KTASPMSPAD (99 aa)) form a DNA-binding region, fork-head. 3 disordered regions span residues 420-450 (AESSDGQQSSKRVKIAPKATADDGESPKHLG), 516-535 (SANPNQNLTSHPTQNCPSNV), and 596-631 (KEHFSKPTTSSTPSKPTDTGLLQPWESETSLPRDPV). A compositionally biased stretch (low complexity) spans 601-612 (KPTTSSTPSKPT).

In terms of tissue distribution, localized to the animal hemisphere of early cleavage stage embryos. During neurulation, expressed in the neural folds. Later, expressed in the spinal cord and in the eye field. During tailbud stages, expression is still restricted to the neuroectoderm, predominantly to the hindbrain, the eye and the spinal cord. With ongoing development, expression is also found at lower levels in the branchial arches. At stage 35, expressed in the rhombencephalon and in the eye retina.

It localises to the nucleus. In terms of biological role, transcription factor regulating the expression of cell cycle genes essential for DNA replication and mitosis. Plays a role in the control of cell proliferation. Also plays a role in DNA break repair, participating in the DNA damage checkpoint response. Promotes transcription of PHB2. This Xenopus laevis (African clawed frog) protein is Forkhead box protein M1.